Here is a 96-residue protein sequence, read N- to C-terminus: Aspartyl/glutamyl-tRNA(Asn/Gln) amidotransferase subunit C (96 aa).

This sequence belongs to the GatC family. As to quaternary structure, heterotrimer of A, B and C subunits.

It carries out the reaction L-glutamyl-tRNA(Gln) + L-glutamine + ATP + H2O = L-glutaminyl-tRNA(Gln) + L-glutamate + ADP + phosphate + H(+). It catalyses the reaction L-aspartyl-tRNA(Asn) + L-glutamine + ATP + H2O = L-asparaginyl-tRNA(Asn) + L-glutamate + ADP + phosphate + 2 H(+). Its function is as follows. Allows the formation of correctly charged Asn-tRNA(Asn) or Gln-tRNA(Gln) through the transamidation of misacylated Asp-tRNA(Asn) or Glu-tRNA(Gln) in organisms which lack either or both of asparaginyl-tRNA or glutaminyl-tRNA synthetases. The reaction takes place in the presence of glutamine and ATP through an activated phospho-Asp-tRNA(Asn) or phospho-Glu-tRNA(Gln). The protein is Aspartyl/glutamyl-tRNA(Asn/Gln) amidotransferase subunit C of Chloroflexus aurantiacus (strain ATCC 29366 / DSM 635 / J-10-fl).